The sequence spans 691 residues: Guanylate cyclase soluble subunit alpha-1 (691 aa).

The residue at position 267 (Ser267) is a Phosphoserine. Residues 480 to 607 (VTMLFSDIVG…GNNVTLANKF (128 aa)) form the Guanylate cyclase domain.

The protein belongs to the adenylyl cyclase class-4/guanylyl cyclase family. As to quaternary structure, the active enzyme is formed by a heterodimer of an alpha and a beta subunit. Heterodimer with GUCY1B1. Mg(2+) is required as a cofactor. The cofactor is Mn(2+).

The protein localises to the cytoplasm. It catalyses the reaction GTP = 3',5'-cyclic GMP + diphosphate. Activated by nitric oxide in the presence of magnesium or manganese ions. In Mus musculus (Mouse), this protein is Guanylate cyclase soluble subunit alpha-1 (Gucy1a1).